Consider the following 562-residue polypeptide: Tetratricopeptide repeat protein 34 (562 aa).

The interval 1–30 is disordered; that stretch reads MLHKKPQRANENGISQRKKPSDQDNSSVKE. The span at 19-30 shows a compositional bias: basic and acidic residues; the sequence is KPSDQDNSSVKE. TPR repeat units follow at residues 51–84, 175–208, 210–242, 304–337, 388–421, 423–455, 461–494, and 509–542; these read DVSR…SSQR, KDSL…EPYN, EALS…DASY, AHFH…NAID, FQAA…SNNN, KYLR…HSSH, AEDY…EHAS, and AGIF…DENN.

This Xenopus laevis (African clawed frog) protein is Tetratricopeptide repeat protein 34 (ttc34).